We begin with the raw amino-acid sequence, 196 residues long: Molybdenum cofactor guanylyltransferase (196 aa).

GTP contacts are provided by residues 10–12 (LAG), Lys-23, Asn-51, Asp-69, and Asp-99. Asp-99 contributes to the Mg(2+) binding site.

The protein belongs to the MobA family. In terms of assembly, monomer. Mg(2+) is required as a cofactor.

Its subcellular location is the cytoplasm. It carries out the reaction Mo-molybdopterin + GTP + H(+) = Mo-molybdopterin guanine dinucleotide + diphosphate. Functionally, transfers a GMP moiety from GTP to Mo-molybdopterin (Mo-MPT) cofactor (Moco or molybdenum cofactor) to form Mo-molybdopterin guanine dinucleotide (Mo-MGD) cofactor. The sequence is that of Molybdenum cofactor guanylyltransferase from Shewanella woodyi (strain ATCC 51908 / MS32).